The chain runs to 506 residues: Proline--tRNA ligase (506 aa).

The protein belongs to the class-II aminoacyl-tRNA synthetase family. ProS type 3 subfamily. Homodimer.

Its subcellular location is the cytoplasm. The enzyme catalyses tRNA(Pro) + L-proline + ATP = L-prolyl-tRNA(Pro) + AMP + diphosphate. Its function is as follows. Catalyzes the attachment of proline to tRNA(Pro) in a two-step reaction: proline is first activated by ATP to form Pro-AMP and then transferred to the acceptor end of tRNA(Pro). The protein is Proline--tRNA ligase of Akkermansia muciniphila (strain ATCC BAA-835 / DSM 22959 / JCM 33894 / BCRC 81048 / CCUG 64013 / CIP 107961 / Muc).